A 241-amino-acid polypeptide reads, in one-letter code: Peroxisomal membrane protein 11C (241 aa).

Residues 1–122 (MALLNRLASA…ADAKVLRVDS (122 aa)) are Cytoplasmic-facing. Residues 123–149 (AWWWTLNTALWTLSLLLGAVKALWTML) form a helical membrane-spanning segment. The Lumenal segment spans residues 150–211 (KLRQKLRSPT…GVLWAGRFPP (62 aa)). Residues 212 to 227 (WLVGLMGTISSILSTC) form a helical membrane-spanning segment. Topologically, residues 228 to 241 (QAVRAGRQAEADSP) are cytoplasmic.

This sequence belongs to the peroxin-11 family. Homodimer. Heterodimer with either PEX11A or PEX11B. Interacts with FIS1. As to expression, expressed in liver and at much lower levels in heart, kidney and testis.

The protein resides in the peroxisome membrane. Its function is as follows. Promotes membrane protrusion and elongation on the peroxisomal surface. This Mus musculus (Mouse) protein is Peroxisomal membrane protein 11C (Pex11g).